The primary structure comprises 449 residues: UDP-N-acetylmuramoyl-tripeptide--D-alanyl-D-alanine ligase (449 aa).

ATP is bound at residue 106 to 112; it reads GSVGKTS.

Belongs to the MurCDEF family. MurF subfamily.

The protein resides in the cytoplasm. It carries out the reaction D-alanyl-D-alanine + UDP-N-acetyl-alpha-D-muramoyl-L-alanyl-gamma-D-glutamyl-meso-2,6-diaminopimelate + ATP = UDP-N-acetyl-alpha-D-muramoyl-L-alanyl-gamma-D-glutamyl-meso-2,6-diaminopimeloyl-D-alanyl-D-alanine + ADP + phosphate + H(+). It functions in the pathway cell wall biogenesis; peptidoglycan biosynthesis. Its function is as follows. Involved in cell wall formation. Catalyzes the final step in the synthesis of UDP-N-acetylmuramoyl-pentapeptide, the precursor of murein. This chain is UDP-N-acetylmuramoyl-tripeptide--D-alanyl-D-alanine ligase, found in Rickettsia prowazekii (strain Madrid E).